The sequence spans 485 residues: Rhamnulokinase (485 aa).

8–12 (ASSGR) serves as a coordination point for ATP. Residues glycine 78 and 231-233 (HDT) each bind substrate. The active-site Proton acceptor is aspartate 232. Threonine 254 contributes to the ATP binding site. Asparagine 291 is a binding site for substrate. Glutamine 299 serves as a coordination point for ATP. Cysteines 348 and 365 form a disulfide. Glycine 397 is a binding site for ATP. Cysteine 408 and cysteine 412 form a disulfide bridge.

This sequence belongs to the rhamnulokinase family. Mg(2+) is required as a cofactor.

It catalyses the reaction L-rhamnulose + ATP = L-rhamnulose 1-phosphate + ADP + H(+). It functions in the pathway carbohydrate degradation; L-rhamnose degradation; glycerone phosphate from L-rhamnose: step 2/3. Its function is as follows. Involved in the catabolism of L-rhamnose (6-deoxy-L-mannose). Catalyzes the transfer of the gamma-phosphate group from ATP to the 1-hydroxyl group of L-rhamnulose to yield L-rhamnulose 1-phosphate. The polypeptide is Rhamnulokinase (Yersinia pestis bv. Antiqua (strain Antiqua)).